Reading from the N-terminus, the 490-residue chain is Myocilin (490 aa).

Residues 1–18 form the signal peptide; sequence MPAVQLLLLAGLVWGAGA. Residues 55 to 170 are a coiled coil; sequence SAIQDLQRDS…QEVARLARGQ (116 aa). A disordered region spans residues 168 to 187; the sequence is RGQCPQARDTSQDVPAGSRE. In terms of domain architecture, Olfactomedin-like spans 230-489; the sequence is GCGELVWVGQ…MVTYDIKLSK (260 aa). A disulfide bridge links C231 with C419. Positions 366, 414, 415, 463, and 464 each coordinate Ca(2+). The Microbody targeting signal signature appears at 488–490; that stretch reads SKI.

As to quaternary structure, homodimer (via N-terminus). Can also form higher oligomers. Interacts with OLFM3, FN1, NRCAM, GLDN and NFASC. Interacts (via N-terminus) with MYL2. Interacts with SFRP1, FRZB, FZD7, FZD10, FZD1 and WIF1; regulates Wnt signaling. Interacts with SNTA1; regulates muscle hypertrophy. Interacts with ERBB2 and ERBB3; activates ERBB2-ERBB3 signaling pathway. Interacts with SNCG; affects its secretion and its aggregation. Post-translationally, palmitoylated. Glycosylated. In terms of processing, undergoes a calcium-dependent proteolytic cleavage at Arg-212 by CAPN2 in the endoplasmic reticulum. The result is the production of two fragments, one of 35 kDa containing the C-terminal olfactomedin-like domain, and another of 20 kDa containing the N-terminal leucine zipper-like domain. Detected in eye aqueous humor (at protein level).

The protein localises to the secreted. The protein resides in the golgi apparatus. It localises to the cytoplasmic vesicle. Its subcellular location is the extracellular space. It is found in the extracellular matrix. The protein localises to the extracellular exosome. The protein resides in the mitochondrion. It localises to the mitochondrion intermembrane space. Its subcellular location is the mitochondrion inner membrane. It is found in the mitochondrion outer membrane. The protein localises to the rough endoplasmic reticulum. The protein resides in the cell projection. It localises to the cilium. Its subcellular location is the endoplasmic reticulum. Functionally, secreted glycoprotein regulating the activation of different signaling pathways in adjacent cells to control different processes including cell adhesion, cell-matrix adhesion, cytoskeleton organization and cell migration. Promotes substrate adhesion, spreading and formation of focal contacts. Negatively regulates cell-matrix adhesion and stress fiber assembly through Rho protein signal transduction. Modulates the organization of actin cytoskeleton by stimulating the formation of stress fibers through interactions with components of Wnt signaling pathways. Promotes cell migration through activation of PTK2 and the downstream phosphatidylinositol 3-kinase signaling. Plays a role in bone formation and promotes osteoblast differentiation in a dose-dependent manner through mitogen-activated protein kinase signaling. Mediates myelination in the peripheral nervous system through ERBB2/ERBB3 signaling. Plays a role as a regulator of muscle hypertrophy through the components of dystrophin-associated protein complex. Involved in positive regulation of mitochondrial depolarization. Plays a role in neurite outgrowth. May participate in the obstruction of fluid outflow in the trabecular meshwork. In Oryctolagus cuniculus (Rabbit), this protein is Myocilin.